We begin with the raw amino-acid sequence, 330 residues long: Global transcription regulator sge1 (330 aa).

2 disordered regions span residues 93-123 (PPGE…RNSV) and 239-306 (QYAP…HQPQ). Residues 105–114 (GKSTTQSGGI) are compositionally biased toward polar residues. Residues 250–306 (QQPALQQQPQQQPQPQHQPQLQYQPQPHQHQPQLQYQPQQQHQPQQQYRPQPQHQPQ) are compositionally biased toward low complexity.

This sequence belongs to the MIT1/WOR1 family.

The protein resides in the nucleus. Global transcriptional regulator of pathogenicity. Acts as an activator of parasitic growth. Not essential for colonization or penetration of the root surface, but required for expression of genes encoding effectors that are secreted during infection. Involved in conidiogenesis, but is not required for conidial fitness, overall (colony) morphology, vegetative growth or carbon source utilization. This is Global transcription regulator sge1 from Fusarium oxysporum f. sp. lycopersici (strain 4287 / CBS 123668 / FGSC 9935 / NRRL 34936) (Fusarium vascular wilt of tomato).